Consider the following 498-residue polypeptide: Probable cytosol aminopeptidase (498 aa).

Residues lysine 269 and aspartate 274 each contribute to the Mn(2+) site. Residue lysine 281 is part of the active site. The Mn(2+) site is built by aspartate 292, aspartate 351, and glutamate 353. Residue arginine 355 is part of the active site.

Belongs to the peptidase M17 family. The cofactor is Mn(2+).

It is found in the cytoplasm. It carries out the reaction Release of an N-terminal amino acid, Xaa-|-Yaa-, in which Xaa is preferably Leu, but may be other amino acids including Pro although not Arg or Lys, and Yaa may be Pro. Amino acid amides and methyl esters are also readily hydrolyzed, but rates on arylamides are exceedingly low.. The enzyme catalyses Release of an N-terminal amino acid, preferentially leucine, but not glutamic or aspartic acids.. Its function is as follows. Presumably involved in the processing and regular turnover of intracellular proteins. Catalyzes the removal of unsubstituted N-terminal amino acids from various peptides. The polypeptide is Probable cytosol aminopeptidase (Glaesserella parasuis serovar 5 (strain SH0165) (Haemophilus parasuis)).